We begin with the raw amino-acid sequence, 535 residues long: Bifunctional purine biosynthesis protein PurH (535 aa).

Residues 6–151 (TRLPIRRALI…KNHKDVAIVV (146 aa)) form the MGS-like domain.

The protein belongs to the PurH family.

It carries out the reaction (6R)-10-formyltetrahydrofolate + 5-amino-1-(5-phospho-beta-D-ribosyl)imidazole-4-carboxamide = 5-formamido-1-(5-phospho-D-ribosyl)imidazole-4-carboxamide + (6S)-5,6,7,8-tetrahydrofolate. The catalysed reaction is IMP + H2O = 5-formamido-1-(5-phospho-D-ribosyl)imidazole-4-carboxamide. The protein operates within purine metabolism; IMP biosynthesis via de novo pathway; 5-formamido-1-(5-phospho-D-ribosyl)imidazole-4-carboxamide from 5-amino-1-(5-phospho-D-ribosyl)imidazole-4-carboxamide (10-formyl THF route): step 1/1. It functions in the pathway purine metabolism; IMP biosynthesis via de novo pathway; IMP from 5-formamido-1-(5-phospho-D-ribosyl)imidazole-4-carboxamide: step 1/1. The protein is Bifunctional purine biosynthesis protein PurH of Pseudomonas aeruginosa (strain LESB58).